Here is a 329-residue protein sequence, read N- to C-terminus: Glucosyl-3-phosphoglycerate synthase (329 aa).

UDP-alpha-D-glucose is bound by residues Pro-55–Glu-59, Ser-86, Lys-119, and Asp-139–Asp-141. Asp-141 lines the Mn(2+) pocket. Gly-189–Thr-192 serves as a coordination point for (2R)-3-phosphoglycerate. UDP-alpha-D-glucose is bound at residue Tyr-234–Glu-237. His-263 contributes to the Mn(2+) binding site. Position 265 (Asn-265) interacts with (2R)-3-phosphoglycerate.

The protein belongs to the glycosyltransferase 2 family. Homodimer. Mg(2+) serves as cofactor. Requires Mn(2+) as cofactor.

The enzyme catalyses an NDP-alpha-D-glucose + (2R)-3-phosphoglycerate = (2R)-2-O-(alpha-D-glucopyranosyl)-3-phospho-glycerate + a ribonucleoside 5'-diphosphate + H(+). It carries out the reaction (2R)-3-phosphoglycerate + UDP-alpha-D-glucose = (2R)-2-O-(alpha-D-glucopyranosyl)-3-phospho-glycerate + UDP + H(+). It catalyses the reaction GDP-D-glucose + (2R)-3-phosphoglycerate = (2R)-2-O-(alpha-D-glucopyranosyl)-3-phospho-glycerate + GDP + H(+). Involved in the biosynthesis of 6-O-methylglucose lipopolysaccarides (MGLPs). Catalyzes the transfer of the glucose moiety from UDP-alpha-D-glucose (UDP-Glc) to the position 2 of 3-phospho-D-glycerate (3-PGA) to form glucosyl-3-phosphoglycerate (GPG). To a lesser extent can also use GDP-Glc but not UDP-Gal or UDP-GlcNAc as the sugar donor. This Mycolicibacterium paratuberculosis (strain ATCC BAA-968 / K-10) (Mycobacterium paratuberculosis) protein is Glucosyl-3-phosphoglycerate synthase.